A 139-amino-acid polypeptide reads, in one-letter code: FAD synthase (139 aa).

ATP is bound by residues 9–10 (TF), 14–17 (HPGH), and N92.

Belongs to the archaeal FAD synthase family. In terms of assembly, homodimer. Requires a divalent metal cation as cofactor.

It catalyses the reaction FMN + ATP + H(+) = FAD + diphosphate. It participates in cofactor biosynthesis; FAD biosynthesis; FAD from FMN: step 1/1. Functionally, catalyzes the transfer of the AMP portion of ATP to flavin mononucleotide (FMN) to produce flavin adenine dinucleotide (FAD) coenzyme. This is FAD synthase from Methanocella paludicola (strain DSM 17711 / JCM 13418 / NBRC 101707 / SANAE).